Reading from the N-terminus, the 375-residue chain is 2-heptyl-3-hydroxy-4(1H)-quinolone synthase (375 aa).

It belongs to the 3-hydroxybenzoate 6-hydroxylase family.

The catalysed reaction is 2-heptyl-4(1H)-quinolone + NADH + O2 + H(+) = 2-heptyl-3-hydroxy-4(1H)-quinolone + NAD(+) + H2O. Its function is as follows. Involved in the degradation pathway of the Pseudomonas aeruginosa quorum sensing signal molecule HHQ (2-heptyl-4(1H)-quinolone) to anthranilate. Catalyzes the hydroxylation of HHQ to PQS (2-heptyl-3-hydroxy-4(1H)-quinolone). This is 2-heptyl-3-hydroxy-4(1H)-quinolone synthase from Mycobacteroides abscessus (strain ATCC 19977 / DSM 44196 / CCUG 20993 / CIP 104536 / JCM 13569 / NCTC 13031 / TMC 1543 / L948) (Mycobacterium abscessus).